Consider the following 400-residue polypeptide: Putative cytochrome P450 133B2 (400 aa).

Residue Cys348 participates in heme binding.

The protein belongs to the cytochrome P450 family. It depends on heme as a cofactor.

The chain is Putative cytochrome P450 133B2 (cyp133B2) from Xylella fastidiosa (strain 9a5c).